A 518-amino-acid polypeptide reads, in one-letter code: Beta-secretase 2 (518 aa).

An N-terminal signal peptide occupies residues 1–20; that stretch reads MGALARALLLPLLAQWLLRA. A propeptide spanning residues 21-62 is cleaved from the precursor; that stretch reads APELAPAPFTLPLRVAAATNRVVAPTPGPGTPAERHADGLAL. Residues 21–473 lie on the Extracellular side of the membrane; sequence APELAPAPFT…SEPILWIVSY (453 aa). Positions 92-429 constitute a Peptidase A1 domain; the sequence is YYLEMLIGTP…DRAQKRVGFA (338 aa). Asp-110 is a catalytic residue. Asn-170 carries an N-linked (GlcNAc...) asparagine glycan. Disulfide bonds link Cys-233-Cys-433, Cys-292-Cys-457, and Cys-344-Cys-393. Asp-303 is an active-site residue. N-linked (GlcNAc...) asparagine glycosylation is present at Asn-366. The helical transmembrane segment at 474–494 threads the bilayer; that stretch reads ALMSVCGAILLVLIVLLLLPF. Residues 495–518 are Cytoplasmic-facing; the sequence is RCQRRPRDPEVVNDESSLVRHRWK.

Belongs to the peptidase A1 family. As to quaternary structure, monomer. Interacts with RTN3 and RTN4. Post-translationally, undergoes autoproteolytic cleavage. In terms of processing, glycosylated. Brain. Present in neurons within the hippocampus, frontal cortex and temporal cortex (at protein level). Expressed at low levels in most peripheral tissues and at higher levels in colon, kidney, pancreas, placenta, prostate, stomach and trachea. Expressed at low levels in the brain. Found in spinal cord, medulla oblongata, substantia nigra and locus coruleus. Expressed in the ductal epithelium of both normal and malignant prostate.

The protein localises to the cell membrane. It localises to the golgi apparatus. Its subcellular location is the endoplasmic reticulum. It is found in the endosome. The protein resides in the melanosome. The catalysed reaction is Broad endopeptidase specificity. Cleaves Glu-Val-Asn-Leu-|-Asp-Ala-Glu-Phe in the Swedish variant of Alzheimer's amyloid precursor protein.. Its function is as follows. Responsible for the proteolytic processing of the amyloid precursor protein (APP). Cleaves APP, between residues 690 and 691, leading to the generation and extracellular release of beta-cleaved soluble APP, and a corresponding cell-associated C-terminal fragment which is later released by gamma-secretase. It has also been shown that it can cleave APP between residues 671 and 672. Involved in the proteolytic shedding of PMEL at early stages of melanosome biogenesis. Cleaves PMEL within the M-beta fragment to release the amyloidogenic PMEL luminal fragment containing M-alpha and a small portion of M-beta N-terminus. This is a prerequisite step for subsequent processing and assembly of PMEL fibrils into amyloid sheets. Responsible also for the proteolytic processing of CLTRN in pancreatic beta cells. The chain is Beta-secretase 2 (BACE2) from Homo sapiens (Human).